Consider the following 235-residue polypeptide: Large ribosomal subunit protein uL1c (235 aa).

It belongs to the universal ribosomal protein uL1 family. As to quaternary structure, part of the 50S ribosomal subunit.

It is found in the plastid. It localises to the chloroplast. Its function is as follows. Binds directly to 23S rRNA. Might be involved in E site tRNA release (Potential). The polypeptide is Large ribosomal subunit protein uL1c (rpl1) (Gracilaria tenuistipitata var. liui (Red alga)).